The primary structure comprises 627 residues: MAGITGVMNMKLAARPSSGRHSRGCRPAVVPSAGKQMLLVRRHPPGSASWPTRATGGGGGGVPAGATAADSSGQAKEEEEEDRASRNTSSFEPSIWGDFFLTYSSPLATSSAQKARMVHRAEQLKKQVAKLIAASGACSLYHRIHLVDALERLCLDYLFEDEINDMVTQIHNVDVSGCDLQTVAMWFYLLRNHGYRVSSDVVFAKFRDEQGGFAANNPRDLLNLYNAACLRTHGETILDEAASFTSKCLKSLAPYTYMEASLASEIKRALEIPLPRSVRIYGAKSRIAEYGNQTEANELVLELAKLNYNLVQLQHQEELKIITRWWNDLELQTRLSFARDRVVECYFWMVGVYFEPSYSRARVILSKVLAIVSLLDDTYDVYGTSQECELFTKCIESWDPAATGGRLPGNMKFIFAKILDTCQSFEDELAPDEKYRMHYLKTFIIDLVRAYNEEVKWREQGYVPATVEEHLQVSARSGGCHLLSCTSFVGMGDVADQEAFEWVRGVPKIVKALCIILRLSDDLKSYEREKMSSHVASTMESCMKEHQVPLEVARVKIQETIDETWKDFNEEWLNLNTNSHLPRELLERIFNLTRTMVYIYQQDDAYTNCHVIKDTINSLFVEPVSIT.

The transit peptide at 1-53 (MAGITGVMNMKLAARPSSGRHSRGCRPAVVPSAGKQMLLVRRHPPGSASWPTR) directs the protein to the chloroplast. A disordered region spans residues 13–90 (AARPSSGRHS…EDRASRNTSS (78 aa)). Residues R339, D376, D380, R518, and D521 each coordinate (2E)-geranyl diphosphate. The Mg(2+) site is built by D376 and D380. The short motif at 376–380 (DDTYD) is the DDXXD motif element. Mg(2+)-binding residues include D521, S525, and E529.

It belongs to the terpene synthase family. Tpsb subfamily. In terms of assembly, monomer. The cofactor is Mg(2+). Mn(2+) is required as a cofactor. Expressed in seedling leaf sheaths and roots.

It localises to the plastid. The protein resides in the chloroplast. It catalyses the reaction (2E)-geranyl diphosphate + H2O = (S)-alpha-terpineol + diphosphate. The catalysed reaction is (2E)-geranyl diphosphate = (4S)-limonene + diphosphate. The enzyme catalyses (2E)-geranyl diphosphate = gamma-terpinene + diphosphate. It carries out the reaction (2E)-geranyl diphosphate = beta-myrcene + diphosphate. It catalyses the reaction (2E)-geranyl diphosphate = terpinolene + diphosphate. The catalysed reaction is (2E)-geranyl diphosphate + H2O = 4-terpineol + diphosphate. The protein operates within secondary metabolite biosynthesis; terpenoid biosynthesis. Component of the volatile terpenes biosynthesis pathways. Mediates the synthesis of a blend of monoterpenes. Converts mainly geranyl diphosphate to alpha-terpineol. Also triggers the biosynthesis of minor monoterpenes including limonene, gamma-terpinene, beta-myrcene, terpinolene and 4-terpineol. This is Alpha-terpineol synthase, chloroplastic from Zea mays (Maize).